We begin with the raw amino-acid sequence, 411 residues long: Trigger factor (411 aa).

The 79-residue stretch at 162 to 240 folds into the PPIase FKBP-type domain; sequence EDLVVIDYTT…IKEVKRRQNI (79 aa).

It belongs to the FKBP-type PPIase family. Tig subfamily.

It is found in the cytoplasm. The enzyme catalyses [protein]-peptidylproline (omega=180) = [protein]-peptidylproline (omega=0). Functionally, involved in protein export. Acts as a chaperone by maintaining the newly synthesized protein in an open conformation. Functions as a peptidyl-prolyl cis-trans isomerase. The polypeptide is Trigger factor (Thermodesulfovibrio yellowstonii (strain ATCC 51303 / DSM 11347 / YP87)).